Reading from the N-terminus, the 625-residue chain is BTB/POZ domain-containing protein At5g48130 (625 aa).

In terms of domain architecture, BTB spans 41 to 105 (ASVHVRVCNK…IYGCPTLIHP (65 aa)). Residues 217 to 469 (DTWIKDLTDL…VQALFIQQLN (253 aa)) form the NPH3 domain. Polar residues predominate over residues 494-507 (VPSSRPLTSQQSPC). The tract at residues 494-513 (VPSSRPLTSQQSPCTDDETG) is disordered.

It belongs to the NPH3 family.

The protein operates within protein modification; protein ubiquitination. In terms of biological role, may act as a substrate-specific adapter of an E3 ubiquitin-protein ligase complex (CUL3-RBX1-BTB) which mediates the ubiquitination and subsequent proteasomal degradation of target proteins. The chain is BTB/POZ domain-containing protein At5g48130 from Arabidopsis thaliana (Mouse-ear cress).